The chain runs to 561 residues: Potassium-transporting ATPase potassium-binding subunit (561 aa).

The next 10 helical transmembrane spans lie at 4-24 (IIMQ…PLGI), 65-85 (AGSV…VLML), 134-154 (GLTV…FAVI), 177-197 (LYIL…QGVV), 253-273 (FTNL…VVMF), 285-305 (AIMT…TISE), 380-400 (GLYG…LLVG), 417-437 (MVCL…AFAV), 484-504 (MVGA…ALYL), and 528-548 (FIGL…LPAL).

This sequence belongs to the KdpA family. As to quaternary structure, the system is composed of three essential subunits: KdpA, KdpB and KdpC.

The protein localises to the cell membrane. Functionally, part of the high-affinity ATP-driven potassium transport (or Kdp) system, which catalyzes the hydrolysis of ATP coupled with the electrogenic transport of potassium into the cytoplasm. This subunit binds the extracellular potassium ions and delivers the ions to the membrane domain of KdpB through an intramembrane tunnel. The sequence is that of Potassium-transporting ATPase potassium-binding subunit from Listeria welshimeri serovar 6b (strain ATCC 35897 / DSM 20650 / CCUG 15529 / CIP 8149 / NCTC 11857 / SLCC 5334 / V8).